The chain runs to 327 residues: Zinc transport protein ZntB (327 aa).

Residues 1-273 (MEAIKGSDVN…ARRTYTMSLM (273 aa)) lie on the Cytoplasmic side of the membrane. Residues 274–294 (AMVFLPSTFLTGLFGVNLGGI) traverse the membrane as a helical segment. Residues 295 to 300 (PGGGWQ) are Periplasmic-facing. Residues 301–321 (FGFSIFCILLVVLIGGVALWL) traverse the membrane as a helical segment. At 322-327 (HRSKWL) the chain is on the cytoplasmic side.

It belongs to the CorA metal ion transporter (MIT) (TC 1.A.35) family.

It localises to the cell inner membrane. The catalysed reaction is Zn(2+)(out) + H(+)(out) = Zn(2+)(in) + H(+)(in). Zinc transporter. Acts as a Zn(2+):proton symporter, which likely mediates zinc ion uptake. In Escherichia coli O139:H28 (strain E24377A / ETEC), this protein is Zinc transport protein ZntB.